We begin with the raw amino-acid sequence, 271 residues long: Phosphatidylglycerol--prolipoprotein diacylglyceryl transferase (271 aa).

7 helical membrane passes run 21 to 41, 60 to 80, 95 to 115, 124 to 144, 176 to 196, 203 to 223, and 230 to 250; these read ISVR…MWLA, LLFA…VLFY, VWTG…AMLW, FFGV…VGRL, SQLY…NWFI, GSVS…VEYV, and LGLF…MIIG. Residue arginine 143 participates in a 1,2-diacyl-sn-glycero-3-phospho-(1'-sn-glycerol) binding.

Belongs to the Lgt family.

The protein resides in the cell inner membrane. It catalyses the reaction L-cysteinyl-[prolipoprotein] + a 1,2-diacyl-sn-glycero-3-phospho-(1'-sn-glycerol) = an S-1,2-diacyl-sn-glyceryl-L-cysteinyl-[prolipoprotein] + sn-glycerol 1-phosphate + H(+). Its pathway is protein modification; lipoprotein biosynthesis (diacylglyceryl transfer). In terms of biological role, catalyzes the transfer of the diacylglyceryl group from phosphatidylglycerol to the sulfhydryl group of the N-terminal cysteine of a prolipoprotein, the first step in the formation of mature lipoproteins. The sequence is that of Phosphatidylglycerol--prolipoprotein diacylglyceryl transferase from Vibrio vulnificus (strain YJ016).